The sequence spans 263 residues: Undecaprenyl-diphosphatase 2 (263 aa).

The next 8 helical transmembrane spans lie at 17-37 (TEFL…LIGF), 42-62 (AKVF…VIFW), 83-103 (LHII…HSAI), 106-126 (VLFG…LMIV), 142-162 (ITYK…WPGF), 183-203 (AEYT…LDLI), 216-236 (LFAT…VSFL), and 242-262 (VKLT…YFFI).

Belongs to the UppP family.

It localises to the cell membrane. The enzyme catalyses di-trans,octa-cis-undecaprenyl diphosphate + H2O = di-trans,octa-cis-undecaprenyl phosphate + phosphate + H(+). Its function is as follows. Catalyzes the dephosphorylation of undecaprenyl diphosphate (UPP). Confers resistance to bacitracin. In Bacillus anthracis, this protein is Undecaprenyl-diphosphatase 2.